Reading from the N-terminus, the 173-residue chain is MALRAVRSVRAAVGGLRAISAPSAPCLPRPWGLRAGAVRELRTGPALLSVRKFTEKHEWVTTENGVGTVGISNFAQEALGDVVYCSLPEVGTKLNKQEEFGALESVKAASELYSPLSGEVTEINKALAENPGLVNKSCYEDGWLIKMTFSNPSELDELMSEEAYEKYIKSIEE.

The N-terminal 48 residues, 1 to 48 (MALRAVRSVRAAVGGLRAISAPSAPCLPRPWGLRAGAVRELRTGPALL), are a transit peptide targeting the mitochondrion. The 83-residue stretch at 66–148 (VGTVGISNFA…YEDGWLIKMT (83 aa)) folds into the Lipoyl-binding domain. Lysine 107 carries the post-translational modification N6-lipoyllysine.

It belongs to the GcvH family. As to quaternary structure, interacts with GLDC. The glycine cleavage system is composed of four proteins: P (GLDC), T (GCST), L (DLD) and H (GCSH). (R)-lipoate is required as a cofactor.

It is found in the mitochondrion. Its function is as follows. The glycine cleavage system catalyzes the degradation of glycine. The H protein (GCSH) shuttles the methylamine group of glycine from the P protein (GLDC) to the T protein (GCST). Has a pivotal role in the lipoylation of enzymes involved in cellular energetics such as the mitochondrial dihydrolipoyllysine-residue acetyltransferase component of pyruvate dehydrogenase complex (DLAT), and the mitochondrial dihydrolipoyllysine-residue succinyltransferase component of 2-oxoglutarate dehydrogenase complex (DLST). In Bos taurus (Bovine), this protein is Glycine cleavage system H protein, mitochondrial.